We begin with the raw amino-acid sequence, 423 residues long: Kynureninase (423 aa).

Pyridoxal 5'-phosphate-binding positions include leucine 105, serine 106, 133–136 (FPSD), aspartate 218, histidine 221, and tyrosine 243. At lysine 244 the chain carries N6-(pyridoxal phosphate)lysine. Residues tryptophan 273 and asparagine 301 each coordinate pyridoxal 5'-phosphate.

This sequence belongs to the kynureninase family. As to quaternary structure, homodimer. The cofactor is pyridoxal 5'-phosphate.

It carries out the reaction L-kynurenine + H2O = anthranilate + L-alanine + H(+). The catalysed reaction is 3-hydroxy-L-kynurenine + H2O = 3-hydroxyanthranilate + L-alanine + H(+). It participates in amino-acid degradation; L-kynurenine degradation; L-alanine and anthranilate from L-kynurenine: step 1/1. It functions in the pathway cofactor biosynthesis; NAD(+) biosynthesis; quinolinate from L-kynurenine: step 2/3. Functionally, catalyzes the cleavage of L-kynurenine (L-Kyn) and L-3-hydroxykynurenine (L-3OHKyn) into anthranilic acid (AA) and 3-hydroxyanthranilic acid (3-OHAA), respectively. The protein is Kynureninase of Xanthomonas euvesicatoria pv. vesicatoria (strain 85-10) (Xanthomonas campestris pv. vesicatoria).